Reading from the N-terminus, the 118-residue chain is Large ribosomal subunit protein uL18 (118 aa).

The disordered stretch occupies residues 1 to 26 (MISKPDKNKIRQKRHRRVRGKLSGTA). The segment covering 10–20 (IRQKRHRRVRG) has biased composition (basic residues).

It belongs to the universal ribosomal protein uL18 family. Part of the 50S ribosomal subunit; part of the 5S rRNA/L5/L18/L25 subcomplex. Contacts the 5S and 23S rRNAs.

Functionally, this is one of the proteins that bind and probably mediate the attachment of the 5S RNA into the large ribosomal subunit, where it forms part of the central protuberance. In Streptococcus equi subsp. zooepidemicus (strain H70), this protein is Large ribosomal subunit protein uL18.